A 1390-amino-acid polypeptide reads, in one-letter code: DNA-directed RNA polymerase subunit beta (1390 aa).

Belongs to the RNA polymerase beta chain family. As to quaternary structure, the RNAP catalytic core consists of 2 alpha, 1 beta, 1 beta' and 1 omega subunit. When a sigma factor is associated with the core the holoenzyme is formed, which can initiate transcription.

It catalyses the reaction RNA(n) + a ribonucleoside 5'-triphosphate = RNA(n+1) + diphosphate. In terms of biological role, DNA-dependent RNA polymerase catalyzes the transcription of DNA into RNA using the four ribonucleoside triphosphates as substrates. The polypeptide is DNA-directed RNA polymerase subunit beta (Methylobacillus flagellatus (strain ATCC 51484 / DSM 6875 / VKM B-1610 / KT)).